The chain runs to 35 residues: Photosystem II reaction center protein T (35 aa).

Residues 3–23 (ALVYTFLLVSTLGIIFFAIFF) traverse the membrane as a helical segment.

Belongs to the PsbT family. PSII is composed of 1 copy each of membrane proteins PsbA, PsbB, PsbC, PsbD, PsbE, PsbF, PsbH, PsbI, PsbJ, PsbK, PsbL, PsbM, PsbT, PsbY, PsbZ, Psb30/Ycf12, at least 3 peripheral proteins of the oxygen-evolving complex and a large number of cofactors. It forms dimeric complexes.

It is found in the plastid. Its subcellular location is the chloroplast thylakoid membrane. Its function is as follows. Found at the monomer-monomer interface of the photosystem II (PS II) dimer, plays a role in assembly and dimerization of PSII. PSII is a light-driven water plastoquinone oxidoreductase, using light energy to abstract electrons from H(2)O, generating a proton gradient subsequently used for ATP formation. The polypeptide is Photosystem II reaction center protein T (Pisum sativum (Garden pea)).